The primary structure comprises 253 residues: PAXIP1-associated glutamate-rich protein 1 (253 aa).

Disordered regions lie at residues 1-109 and 128-253; these read MSLV…MPPP and QAEI…QRKY. Over residues 51–62 the composition is skewed to basic and acidic residues; the sequence is EGGREEAEHEGS. The interval 116-160 is sufficient for interaction with NCOA1; the sequence is YELLAAHGTLELQAEILPRRPPTPEAQSEEERSDEEPEAKEEEEE. Thr-138 carries the post-translational modification Phosphothreonine. Acidic residues predominate over residues 142–159; that stretch reads QSEEERSDEEPEAKEEEE. Ser-143 and Ser-148 each carry phosphoserine. The interval 161–253 is sufficient for interaction with ESR1; that stretch reads KPHMPTEFDF…GSLFPRQRKY (93 aa). Residues 195-223 show a composition bias toward basic and acidic residues; it reads QKREARLDKVLSDMKRHKKLEEQILRTGR. The residue at position 237 (Ser-237) is a Phosphoserine.

Component of the KMT2 family MLL2/MLL3 complex, at least composed of the histone methyltransferases KMT2D and/or KMT2C, the common complex subunits ASH2L, RBBP5, WDR5 and DPY30, and the complex type-specific subunits PAXIP1/PTIP, PAGR1, NCOA6 and KDM6A; PAXIP1 is required for the association with the MLL2/MLL3 complex. Forms a constitutive complex with PAXIP1/PTIP independently of the MLL2/MLL3 complex. Interacts with NCOA1, ESR1, NR3C1, AR.

It localises to the nucleus. Functionally, its association with the histone methyltransferase MLL2/MLL3 complex is suggesting a role in epigenetic transcriptional activation. However, in association with PAXIP1/PTIP is proposed to function at least in part independently of the MLL2/MLL3 complex. Proposed to be recruited by PAXIP1 to sites of DNA damage where the PAGR1:PAXIP1 complex is required for cell survival in response to DNA damage independently of the MLL2/MLL3 complex. However, its function in DNA damage has been questioned. During immunoglobulin class switching in activated B-cells is involved in transcription regulation of downstream switch regions at the immunoglobulin heavy-chain (Igh) locus independently of the MLL2/MLL3 complex. Involved in both estrogen receptor-regulated gene transcription and estrogen-stimulated G1/S cell-cycle transition. Acts as a transcriptional cofactor for nuclear hormone receptors. Inhibits the induction properties of several steroid receptors such as NR3C1, AR and PPARG; the mechanism of inhibition appears to be gene-dependent. This is PAXIP1-associated glutamate-rich protein 1 (PAGR1) from Bos taurus (Bovine).